The sequence spans 264 residues: Major prion protein (264 aa).

The signal sequence occupies residues 1 to 24 (MVKSHIGSWILVLFVAMWSDVGLC). An interaction with GRB2, ERI3 and SYN1 region spans residues 25-241 (KKRPKPGGGW…ESQAYYQRGA (217 aa)). The interval 28–118 (PKPGGGWNTG…QWNKPSKPKT (91 aa)) is disordered. 6 consecutive repeat copies span residues 54-62 (PQGGGSWGQ), 63-70 (PHGGGWGQ), 71-78 (PHGGSWGQ), 79-86 (PHGGGWGQ), 87-94 (PHGGGWGQ), and 95-103 (PHGGGGWGQ). The segment at 54–103 (PQGGGSWGQPHGGGWGQPHGGSWGQPHGGGWGQPHGGGWGQPHGGGGWGQ) is 6 X 8 AA tandem repeats of P-H-G-G-G-W-G-Q. Over residues 55 to 107 (QGGGSWGQPHGGGWGQPHGGSWGQPHGGGWGQPHGGGWGQPHGGGGWGQGGTH) the composition is skewed to gly residues. 12 residues coordinate Cu(2+): H72, G73, G74, H80, G81, G82, H88, G89, G90, H96, G98, and G99. Cysteines 190 and 225 form a disulfide. N192 and N208 each carry an N-linked (GlcNAc...) asparagine glycan. Residue A241 is the site of GPI-anchor amidated alanine attachment. The propeptide at 242 to 264 (SVVLFSSPPVVLLISFLIFLIVG) is removed in mature form.

This sequence belongs to the prion family. As to quaternary structure, monomer and homodimer. Has a tendency to aggregate into amyloid fibrils containing a cross-beta spine, formed by a steric zipper of superposed beta-strands. Soluble oligomers may represent an intermediate stage on the path to fibril formation. Copper binding may promote oligomerization. Interacts with GRB2, APP, ERI3/PRNPIP and SYN1. Mislocalized cytosolically exposed PrP interacts with MGRN1; this interaction alters MGRN1 subcellular location and causes lysosomal enlargement. Interacts with KIAA1191.

The protein localises to the cell membrane. The protein resides in the golgi apparatus. Functionally, its primary physiological function is unclear. Has cytoprotective activity against internal or environmental stresses. May play a role in neuronal development and synaptic plasticity. May be required for neuronal myelin sheath maintenance. May play a role in iron uptake and iron homeostasis. Soluble oligomers are toxic to cultured neuroblastoma cells and induce apoptosis (in vitro). Association with GPC1 (via its heparan sulfate chains) targets PRNP to lipid rafts. Also provides Cu(2+) or Zn(2+) for the ascorbate-mediated GPC1 deaminase degradation of its heparan sulfate side chains. The sequence is that of Major prion protein (PRNP) from Boselaphus tragocamelus (Nilgai).